The sequence spans 454 residues: MEVNRLAYLTAMGSLRPPSPNGDWSKPQDAPHKSVIDMMASGVSHIKVLKVDIDAQHLCVCLPHNMLTCCHPAVDMENLLGSGSFGKVYASGPGICAKVFTSAEAFYHETVMMDLVALARSYNCDDFKSVCLQFYLSACVTCKTIWYPRFSQSLHTFKDFTVDHLHDLDREFKGLTDAVFFLNQKCGLFHGDICPSNILVETFKGPGSGIKSLILTDLGTAAIHAGNTFKSLSINNPQDDSVIYNAQIYLSPFLVCKDYVKPLCVLRRCYLLRHHAQDVDVEEITDTVVGQNMALKIDCSTLLQVLLLVLARVMEQPNSLTYESWLREIEDDSSDAYFLLLLGPKLVLLTHLSQLWEINFDVGVNTQGVLSRGQLPHPHTRLLKECCQLFREEFDAVVKEEVLIKLGQGVLKNIIFELLQFDYFEIHGRQPQHGLFAQSHAARADSEHGNWRTS.

ATP-binding positions include leucine 80 to valine 88 and lysine 98. The active-site Proton acceptor is aspartate 192.

It belongs to the protein kinase superfamily. Tyr protein kinase family.

It catalyses the reaction L-tyrosyl-[protein] + ATP = O-phospho-L-tyrosyl-[protein] + ADP + H(+). This is Putative tyrosine kinase 36 (36) from Alcelaphine herpesvirus 1 (strain C500) (AlHV-1).